The sequence spans 368 residues: Alanine racemase (368 aa).

Lys40 acts as the Proton acceptor; specific for D-alanine in catalysis. The residue at position 40 (Lys40) is an N6-(pyridoxal phosphate)lysine. Arg136 is a substrate binding site. Tyr263 acts as the Proton acceptor; specific for L-alanine in catalysis. Met310 is a substrate binding site.

Belongs to the alanine racemase family. The cofactor is pyridoxal 5'-phosphate.

It catalyses the reaction L-alanine = D-alanine. The protein operates within amino-acid biosynthesis; D-alanine biosynthesis; D-alanine from L-alanine: step 1/1. Its function is as follows. Catalyzes the interconversion of L-alanine and D-alanine. May also act on other amino acids. In Streptococcus gordonii (strain Challis / ATCC 35105 / BCRC 15272 / CH1 / DL1 / V288), this protein is Alanine racemase (alr).